Here is a 122-residue protein sequence, read N- to C-terminus: Large ribosomal subunit protein bL12 (122 aa).

It belongs to the bacterial ribosomal protein bL12 family. Homodimer. Part of the ribosomal stalk of the 50S ribosomal subunit. Forms a multimeric L10(L12)X complex, where L10 forms an elongated spine to which 2 to 4 L12 dimers bind in a sequential fashion. Binds GTP-bound translation factors.

Functionally, forms part of the ribosomal stalk which helps the ribosome interact with GTP-bound translation factors. Is thus essential for accurate translation. The chain is Large ribosomal subunit protein bL12 from Mycoplasma genitalium (strain ATCC 33530 / DSM 19775 / NCTC 10195 / G37) (Mycoplasmoides genitalium).